The primary structure comprises 118 residues: Large ribosomal subunit protein bL20 (118 aa).

Belongs to the bacterial ribosomal protein bL20 family.

In terms of biological role, binds directly to 23S ribosomal RNA and is necessary for the in vitro assembly process of the 50S ribosomal subunit. It is not involved in the protein synthesizing functions of that subunit. This Bacillus anthracis (strain CDC 684 / NRRL 3495) protein is Large ribosomal subunit protein bL20.